The following is a 338-amino-acid chain: Glycerol-3-phosphate dehydrogenase [NAD(P)+] (338 aa).

Positions 13, 14, and 108 each coordinate NADPH. Residues Lys108, Gly139, and Ser141 each coordinate sn-glycerol 3-phosphate. Ala143 lines the NADPH pocket. 5 residues coordinate sn-glycerol 3-phosphate: Lys194, Asp247, Ser257, Arg258, and Asn259. Catalysis depends on Lys194, which acts as the Proton acceptor. Arg258 is a binding site for NADPH. 2 residues coordinate NADPH: Val282 and Glu284.

This sequence belongs to the NAD-dependent glycerol-3-phosphate dehydrogenase family.

The protein localises to the cytoplasm. It carries out the reaction sn-glycerol 3-phosphate + NAD(+) = dihydroxyacetone phosphate + NADH + H(+). It catalyses the reaction sn-glycerol 3-phosphate + NADP(+) = dihydroxyacetone phosphate + NADPH + H(+). It functions in the pathway membrane lipid metabolism; glycerophospholipid metabolism. Its function is as follows. Catalyzes the reduction of the glycolytic intermediate dihydroxyacetone phosphate (DHAP) to sn-glycerol 3-phosphate (G3P), the key precursor for phospholipid synthesis. The chain is Glycerol-3-phosphate dehydrogenase [NAD(P)+] from Listeria monocytogenes serotype 4b (strain CLIP80459).